The primary structure comprises 230 residues: Ropporin-1-like protein (230 aa).

One can recognise an RIIa domain in the interval 17 to 54 (PELPDILKQFTKAAIRTQPADVLQWSAGYFSALSRGDP).

Belongs to the ropporin family. Component of the axonemal radial spoke complex 1 (RS1), at least composed of spoke head proteins RSPH1, RSPH3, RSPH9 and the cilia-specific component RSPH4A or sperm-specific component RSPH6A, spoke stalk proteins RSPH14, DNAJB13, DYDC1, ROPN1L and NME5, and the anchor protein IQUB. May interact with AKAP3. Interacts with FSCB; the interaction increases upon spermatozoa capacitation conditions. Interacts with CFAP61. In terms of processing, sumoylated, sumoylation decreases upon spermatozoa capacitation conditions.

It localises to the cell projection. The protein localises to the cilium. It is found in the flagellum. Functions as part of axonemal radial spoke complexes that play an important part in the motility of sperm and cilia. Important for male fertility. With ROPN1, involved in fibrous sheath integrity and sperm motility, plays a role in PKA-dependent signaling processes required for spermatozoa capacitation. The polypeptide is Ropporin-1-like protein (ROPN1L) (Macaca fascicularis (Crab-eating macaque)).